Reading from the N-terminus, the 619-residue chain is Very-long-chain aldehyde decarbonylase GL1-4 (619 aa).

The next 5 helical transmembrane spans lie at 45 to 65 (IAFS…QIWI), 94 to 114 (GWDD…LAMP), 126 to 146 (GAVV…YWFH), 178 to 198 (FAEH…TIYL), and 325 to 345 (AWYM…AWIY). The Fatty acid hydroxylase domain maps to 138-272 (VEFLYYWFHR…MPFYDYIYNT (135 aa)).

It belongs to the sterol desaturase family. Homodimer. As to expression, expressed ubiquitously at low levels, with higher accumulation in developing panicles, shoots and flag leaves.

The protein resides in the endoplasmic reticulum membrane. The enzyme catalyses a long-chain fatty aldehyde + 2 NADPH + O2 + H(+) = a long-chain alkane + formate + 2 NADP(+) + H2O. In terms of biological role, aldehyde decarbonylase involved in the conversion of aldehydes to alkanes. Core component of a very-long-chain alkane synthesis complex. The sequence is that of Very-long-chain aldehyde decarbonylase GL1-4 from Oryza sativa subsp. japonica (Rice).